Consider the following 173-residue polypeptide: uncharacterized protein (173 aa).

Residues Met1–Lys11 are compositionally biased toward basic and acidic residues. Residues Met1 to Tyr173 form a disordered region. The span at Phe17 to Ile41 shows a compositional bias: polar residues. Basic and acidic residues-rich tracts occupy residues Lys56–Asn109 and Ala120–Lys144. Over residues Lys145 to Lys156 the composition is skewed to basic residues. The span at Asn157–Tyr173 shows a compositional bias: basic and acidic residues.

This is an uncharacterized protein from Caenorhabditis elegans.